We begin with the raw amino-acid sequence, 316 residues long: Ornithine carbamoyltransferase (316 aa).

Carbamoyl phosphate is bound by residues 59–62 (STRT), Gln86, Arg110, and 137–140 (HPCQ). Residues Asn168, Asp232, and 236-237 (SM) contribute to the L-ornithine site. Carbamoyl phosphate contacts are provided by residues 273–274 (CL) and Arg301.

This sequence belongs to the aspartate/ornithine carbamoyltransferase superfamily. OTCase family.

It localises to the cytoplasm. It catalyses the reaction carbamoyl phosphate + L-ornithine = L-citrulline + phosphate + H(+). It functions in the pathway amino-acid biosynthesis; L-arginine biosynthesis; L-arginine from L-ornithine and carbamoyl phosphate: step 1/3. Its function is as follows. Reversibly catalyzes the transfer of the carbamoyl group from carbamoyl phosphate (CP) to the N(epsilon) atom of ornithine (ORN) to produce L-citrulline. The chain is Ornithine carbamoyltransferase from Listeria innocua serovar 6a (strain ATCC BAA-680 / CLIP 11262).